Here is a 229-residue protein sequence, read N- to C-terminus: ADP-ribosylation factor-like protein 6-interacting protein 4 (229 aa).

The segment covering 1-20 (MAHVGSRKRSRSRSRSRSGR) has biased composition (basic residues). The disordered stretch occupies residues 1-152 (MAHVGSRKRS…EDNDGPVLTD (152 aa)). The span at 21-35 (RGSEKRSKRSSKDAS) shows a compositional bias: basic and acidic residues. Residues 66-87 (SRSSSTSSSSSSSSSASSSSSS) are compositionally biased toward low complexity. Residues 90–117 (RKKRAKHKEKKRKKKKKKRKKKLKKRVK) show a composition bias toward basic residues. Residues serine 140 and serine 174 each carry the phosphoserine modification. Lysine 191 participates in a covalent cross-link: Glycyl lysine isopeptide (Lys-Gly) (interchain with G-Cter in SUMO2).

It belongs to the ARL6IP4 family. As to quaternary structure, interacts with ZCCHC17. Interacts with SRSF2. Interacts with ARL6. In terms of tissue distribution, widely expressed. Expressed at high level in testis and thymus.

It is found in the nucleus. Its subcellular location is the nucleolus. It localises to the nucleus speckle. In terms of biological role, involved in modulating alternative pre-mRNA splicing with either 5' distal site activation or preferential use of 3' proximal site. This is ADP-ribosylation factor-like protein 6-interacting protein 4 (Arl6ip4) from Mus musculus (Mouse).